The chain runs to 452 residues: MPPLEDTIAALATPAGISALAILRASGPDTRRIAEAILGRTPLPRRIQRVDYRDRAGHILDEVLCVFFPQPRSYTGEDLLEISTHGNPFIAQRVLQDLFARGCRPAGPGEFTQRAFLNGRLDLSQAEAVMDLIHAQSDRALAAANHQLRGSLGRHVQRIIDRVVRVLAQVEAYIDFPDEDLPSSNRDTLAAELEMARHEAEQLIATQRYGNLIRDGIKTVIVGAPNVGKSSLLNRLVGRERALVSAEPGTTRDFIEERIAVGEHCIRLVDTAGLNVSPAPLEALGIHKSLEQLADADLVLAIVDLSDPEPSLPPELAKRLDPKNTLLVANKIDLCAGKCVLDTVDQWFGMVFCSAKIGVGLDDLFGAIGRWADQWQITVGQDVIAVNARHSHALALALEALDAALDKLRSGDAAELLASDLRSALLALGDIAGRVDNERVLDELFATFCIGK.

3 residues coordinate (6S)-5-formyl-5,6,7,8-tetrahydrofolate: arginine 24, glutamate 81, and arginine 120. Residues 216–373 (GIKTVIVGAP…LFGAIGRWAD (158 aa)) enclose the TrmE-type G domain. Residues 226 to 231 (NVGKSS), 245 to 251 (SAEPGTT), and 270 to 273 (DTAG) each bind GTP. The Mg(2+) site is built by serine 230 and threonine 251. Lysine 452 serves as a coordination point for (6S)-5-formyl-5,6,7,8-tetrahydrofolate.

It belongs to the TRAFAC class TrmE-Era-EngA-EngB-Septin-like GTPase superfamily. TrmE GTPase family. Homodimer. Heterotetramer of two MnmE and two MnmG subunits. K(+) serves as cofactor.

It localises to the cytoplasm. Functionally, exhibits a very high intrinsic GTPase hydrolysis rate. Involved in the addition of a carboxymethylaminomethyl (cmnm) group at the wobble position (U34) of certain tRNAs, forming tRNA-cmnm(5)s(2)U34. This is tRNA modification GTPase MnmE from Opitutus terrae (strain DSM 11246 / JCM 15787 / PB90-1).